Reading from the N-terminus, the 117-residue chain is Antitoxin RelB3 (117 aa).

Its function is as follows. Antitoxin component of a type II toxin-antitoxin (TA) system. Neutralizes the effect of cognate toxin RelE3, but no other RelE or ParE toxin. In Caulobacter vibrioides (strain ATCC 19089 / CIP 103742 / CB 15) (Caulobacter crescentus), this protein is Antitoxin RelB3 (relB3).